A 206-amino-acid chain; its full sequence is Small ribosomal subunit protein uS4 (206 aa).

In terms of domain architecture, S4 RNA-binding spans 96 to 156 (CRLDNVVYRM…EKSLGQLRIV (61 aa)).

Belongs to the universal ribosomal protein uS4 family. Part of the 30S ribosomal subunit. Contacts protein S5. The interaction surface between S4 and S5 is involved in control of translational fidelity.

In terms of biological role, one of the primary rRNA binding proteins, it binds directly to 16S rRNA where it nucleates assembly of the body of the 30S subunit. With S5 and S12 plays an important role in translational accuracy. The chain is Small ribosomal subunit protein uS4 from Pseudomonas putida (strain ATCC 47054 / DSM 6125 / CFBP 8728 / NCIMB 11950 / KT2440).